The sequence spans 156 residues: Small ribosomal subunit protein uS7 (156 aa).

It belongs to the universal ribosomal protein uS7 family. As to quaternary structure, part of the 30S ribosomal subunit. Contacts proteins S9 and S11.

Functionally, one of the primary rRNA binding proteins, it binds directly to 16S rRNA where it nucleates assembly of the head domain of the 30S subunit. Is located at the subunit interface close to the decoding center, probably blocks exit of the E-site tRNA. The sequence is that of Small ribosomal subunit protein uS7 from Thiobacillus denitrificans (strain ATCC 25259 / T1).